We begin with the raw amino-acid sequence, 338 residues long: Mitoferrin-1 (338 aa).

The disordered stretch occupies residues 1–42; sequence MELRSGSVGSQAVARRMDGDSRDGGGGKDATGSEDYENLPTS. Residues 15–26 are compositionally biased toward basic and acidic residues; it reads RRMDGDSRDGGG. Solcar repeat units lie at residues 43–131, 141–225, and 232–326; these read ASVS…MKRT, NSHL…LQEQ, and YNPQ…FKYF. Helical transmembrane passes span 45 to 64, 106 to 125, 143 to 162, 200 to 219, 234 to 253, and 301 to 320; these read VSTH…SVMY, GVNV…FACY, HLAN…AVMN, SYTT…FITY, PQSH…AATT, and GIQA…WSVY.

It belongs to the mitochondrial carrier (TC 2.A.29) family. As to quaternary structure, interacts with ACB10; this interaction stabilizes SLC25A37 and enhances the function of SLC25A37 to import mitochondrial iron during erythroid differentiation.

It is found in the mitochondrion inner membrane. It carries out the reaction Fe(2+)(in) = Fe(2+)(out). Mitochondrial iron transporter that specifically mediates iron uptake in developing erythroid cells, thereby playing an essential role in heme biosynthesis. The sequence is that of Mitoferrin-1 (SLC25A37) from Homo sapiens (Human).